A 302-amino-acid chain; its full sequence is Cyclin-C (302 aa).

The 107-residue stretch at 46-152 folds into the Cyclin N-terminal domain; that stretch reads NFITAVATEG…VYDSEFILVE (107 aa). The disordered stretch occupies residues 281 to 302; that stretch reads LPKPNQQPPPQQQHQHQQGYHL. Low complexity predominate over residues 292–302; that stretch reads QQHQHQQGYHL.

It belongs to the cyclin family. Cyclin C subfamily. In terms of assembly, component of the Mediator complex.

The protein localises to the nucleus. Its function is as follows. Component of the Mediator complex, a coactivator involved in regulated gene transcription of nearly all RNA polymerase II-dependent genes. Mediator functions as a bridge to convey information from gene-specific regulatory proteins to the basal RNA polymerase II transcription machinery. Mediator is recruited to promoters by direct interactions with regulatory proteins and serves as a scaffold for the assembly of a functional preinitiation complex with RNA polymerase II and the general transcription factors. Binds to and activates cyclin-dependent kinase cdk-8 that phosphorylates the CTD (C-terminal domain) of the large subunit of RNA polymerase II (RNAp II), which may inhibit the formation of a transcription initiation complex. The polypeptide is Cyclin-C (cic-1) (Caenorhabditis elegans).